The sequence spans 53 residues: SYGYBZKSAGVSVPGPMGPSGPRGLPGPPGAPGPZGFZGPPGZPGZPGSSGPM.

The disordered stretch occupies residues 1–53; the sequence is SYGYBZKSAGVSVPGPMGPSGPRGLPGPPGAPGPZGFZGPPGZPGZPGSSGPM. The residue at position 7 (Lys7) is an Allysine. Ser8 carries the post-translational modification Phosphoserine. The span at 10-23 shows a compositional bias: low complexity; the sequence is GVSVPGPMGPSGPR. 4-hydroxyproline occurs at positions 26, 29, 32, 41, 44, and 47. The segment covering 34–53 has biased composition (low complexity); it reads PZGFZGPPGZPGZPGSSGPM.

Belongs to the fibrillar collagen family. In terms of assembly, trimers of one alpha 2(I) and two alpha 1(I) chains. Interacts with MRC2. Interacts with TRAM2. Interacts with MFAP4 in a Ca (2+)-dependent manner. Post-translationally, contains mostly 4-hydroxyproline. Proline residues at the third position of the tripeptide repeating unit (G-X-Y) are hydroxylated in some or all of the chains. Contains 3-hydroxyproline at a few sites. This modification occurs on the first proline residue in the sequence motif Gly-Pro-Hyp, where Hyp is 4-hydroxyproline. In terms of processing, lysine residues at the third position of the tripeptide repeating unit (G-X-Y) are 5-hydroxylated in some or all of the chains. Post-translationally, O-glycosylated on hydroxylated lysine residues. The O-linked glycan consists of a Glc-Gal disaccharide. As to expression, forms the fibrils of tendon, ligaments and bones. In bones the fibrils are mineralized with calcium hydroxyapatite.

The protein resides in the secreted. The protein localises to the extracellular space. It is found in the extracellular matrix. Functionally, type I collagen is a member of group I collagen (fibrillar forming collagen). The polypeptide is Collagen alpha-1(I) chain (COL1A1) (Oryctolagus cuniculus (Rabbit)).